The chain runs to 238 residues: Ribonuclease PH (238 aa).

Phosphate-binding positions include arginine 86 and 124–126 (GTR).

Belongs to the RNase PH family. As to quaternary structure, homohexameric ring arranged as a trimer of dimers.

It carries out the reaction tRNA(n+1) + phosphate = tRNA(n) + a ribonucleoside 5'-diphosphate. Functionally, phosphorolytic 3'-5' exoribonuclease that plays an important role in tRNA 3'-end maturation. Removes nucleotide residues following the 3'-CCA terminus of tRNAs; can also add nucleotides to the ends of RNA molecules by using nucleoside diphosphates as substrates, but this may not be physiologically important. Probably plays a role in initiation of 16S rRNA degradation (leading to ribosome degradation) during starvation. In Pectobacterium atrosepticum (strain SCRI 1043 / ATCC BAA-672) (Erwinia carotovora subsp. atroseptica), this protein is Ribonuclease PH.